Here is a 197-residue protein sequence, read N- to C-terminus: RNA pyrophosphohydrolase (197 aa).

Residues 6–149 form the Nudix hydrolase domain; the sequence is GYRPNVGIVI…KRDVYRKAMK (144 aa). The short motif at 38-59 is the Nudix box element; it reads GGINDGETPEQAMYRELYEEVG. The interval 165–197 is disordered; sequence LSTNNNDEKKANYSAKKPYSPYRNQDKKRKTRV.

This sequence belongs to the Nudix hydrolase family. RppH subfamily. A divalent metal cation is required as a cofactor.

Its function is as follows. Accelerates the degradation of transcripts by removing pyrophosphate from the 5'-end of triphosphorylated RNA, leading to a more labile monophosphorylated state that can stimulate subsequent ribonuclease cleavage. The sequence is that of RNA pyrophosphohydrolase from Mannheimia succiniciproducens (strain KCTC 0769BP / MBEL55E).